The chain runs to 445 residues: RCC1 domain-containing protein RUG3, mitochondrial (445 aa).

A mitochondrion-targeting transit peptide spans 1-22; that stretch reads MAALSHRLRSFTRRFSSTRTTQ. RCC1 repeat units follow at residues 47-101, 118-169, 171-221, 222-279, 280-331, 333-383, and 385-442; these read TLQL…DSSS, DGDL…ALTH, GDVF…AITE, SGEL…ALTK, EGQL…ALTE, GKVL…AITD, and GELW…CLVS.

As to quaternary structure, interacts with ATM. In terms of tissue distribution, mostly expressed in roots and rosette leaves of young seedlings, and, to a lower extent, in the flowers and siliques of mature plants. Preferentially expressed in the vascular tissues.

Its subcellular location is the mitochondrion. In terms of biological role, regulates DNA damage response (DDR) synergistically with ATM. Together with ATM, involved in the splicing of the ND2/NAD2 mRNA. Required for the accumulation of mitochondrial respiratory chain complex I. Negative regulator of plant responses to abscisic acid (ABA). May have a pivotal role in vegetative growth and the phase transition from vegetative to reproductive growth. This chain is RCC1 domain-containing protein RUG3, mitochondrial, found in Arabidopsis thaliana (Mouse-ear cress).